A 423-amino-acid chain; its full sequence is Core protease OPG083 (423 aa).

Catalysis depends on residues H241, D248, and C328.

This sequence belongs to the peptidase C57 family.

The protein resides in the virion. In terms of biological role, late protein responsible for processing most or all of the viral core and membrane proteins known to undergo morphogenesis-associated proteolysis. These proteolytic events are involved in the transformation of immature virions (IV) into mature virions (MV). Probably cleaves at least the OPG129/A3, OPG136/A10, OPG098/L4, and OPG144/A17 precursors preferentially at Ala-Gly-|-Ala motifs. Also seems to process Ala-Gly-|-Ser and Ala-Gly-|-Thr motifs. The chain is Core protease OPG083 (OPG083) from Bos taurus (Bovine).